We begin with the raw amino-acid sequence, 435 residues long: Serine--tRNA ligase (435 aa).

Residues 48–68 (MKAQRNEASKKIGEAKRNGES) are disordered. Residues 49 to 68 (KAQRNEASKKIGEAKRNGES) are compositionally biased toward basic and acidic residues. 230-232 (TAE) provides a ligand contact to L-serine. 261-263 (RSE) is an ATP binding site. E284 is a binding site for L-serine. An ATP-binding site is contributed by 348–351 (EVSS). S383 provides a ligand contact to L-serine.

The protein belongs to the class-II aminoacyl-tRNA synthetase family. Type-1 seryl-tRNA synthetase subfamily. In terms of assembly, homodimer. The tRNA molecule binds across the dimer.

It is found in the cytoplasm. The catalysed reaction is tRNA(Ser) + L-serine + ATP = L-seryl-tRNA(Ser) + AMP + diphosphate + H(+). The enzyme catalyses tRNA(Sec) + L-serine + ATP = L-seryl-tRNA(Sec) + AMP + diphosphate + H(+). The protein operates within aminoacyl-tRNA biosynthesis; selenocysteinyl-tRNA(Sec) biosynthesis; L-seryl-tRNA(Sec) from L-serine and tRNA(Sec): step 1/1. In terms of biological role, catalyzes the attachment of serine to tRNA(Ser). Is also able to aminoacylate tRNA(Sec) with serine, to form the misacylated tRNA L-seryl-tRNA(Sec), which will be further converted into selenocysteinyl-tRNA(Sec). The sequence is that of Serine--tRNA ligase from Limosilactobacillus reuteri (strain DSM 20016) (Lactobacillus reuteri).